Reading from the N-terminus, the 907-residue chain is Epidermal growth factor receptor substrate 15-like 1 (907 aa).

An N-acetylalanine modification is found at A2. Positions 15-104 (GNPLYESYYK…SLTMPPPKFH (90 aa)) constitute an EH 1 domain. The interval 15–368 (GNPLYESYYK…PSERGTPIPD (354 aa)) is interaction with DAB2. The region spanning 48 to 83 (LSDIILGKIWDLADPEGKGFLDKQGFYVALRLVACA) is the EF-hand 1 domain. Y74 is modified (phosphotyrosine). A phosphoserine mark is found at S107 and S108. Residues 127-215 (EKAKFDGIFE…PPLIPPSKRK (89 aa)) form the EH 2 domain. Residues 159–194 (LPLDVLGRVWDLSDIDKDGHLDRDEFAVAMHLVYRA) form the EF-hand 2 domain. The Ca(2+) site is built by D172, D174, D176, H178, and E183. Phosphoserine occurs at positions 229, 244, 253, 255, and 259. The tract at residues 229-260 (SPPPKDSLRSTPSHGSVSSLNSTGSLSPKHSV) is disordered. The segment covering 241 to 255 (SHGSVSSLNSTGSLS) has biased composition (low complexity). 2 consecutive EF-hand domains span residues 272-307 (ADKMRFDEIFLKTDLDLDGYVSGQEVKEIFMHSGLT) and 308-341 (QNLLAHIWALADTRQTGKLSKEQFALAMYFIQQK). The 91-residue stretch at 273–363 (DKMRFDEIFL…PDMVPPSERG (91 aa)) folds into the EH 3 domain. Residue S360 is modified to Phosphoserine. T364 is modified (phosphothreonine). 2 positions are modified to phosphoserine: S369 and S375. Residues 384 to 551 (LDDISQEIAQ…RSKLSQLQES (168 aa)) adopt a coiled-coil conformation. Residue S558 is modified to Phosphoserine. Residue Y562 is modified to Phosphotyrosine. Phosphoserine is present on S610. A disordered region spans residues 611–860 (QELHPDPFQA…SSSGFADFTS (250 aa)). Residues 622-636 (DPFKSDPFKGADPFK) show a composition bias toward basic and acidic residues. Residues 643 to 652 (DPFSEQQTAA) are compositionally biased toward polar residues. Residues S664, S670, S695, S715, and S732 each carry the phosphoserine modification. Over residues 682-696 (NDPFTSDPFTKNPSL) the composition is skewed to polar residues. Low complexity predominate over residues 703–743 (FESSDPFSSSSISSKGSDPFGTLDPFGSSSFSSAEGFADFS). Residues 776–790 (ALPPKKPAPPRPKPP) show a composition bias toward pro residues. S791 carries the phosphoserine modification. The span at 791–802 (SGQSTPVSQLGS) shows a compositional bias: polar residues. T795 is subject to Phosphothreonine. Over residues 840-853 (APSSSAKPPKTSSS) the composition is skewed to low complexity. 2 consecutive UIM domains span residues 863–882 (NEEQQLAWAKRESEKAEQER) and 889–907 (QEQEDLELAIALSKADMPA).

In terms of assembly, interacts with EPS15, AGFG1/HRB and AGFG2/HRBL. Associates with the clathrin-associated adapter protein complex 2 (AP-2). Interacts with FCHO1. Interacts with FCHO2. Interacts (via EH domains) with DAB2. Interacts with UBQLN1 (via ubiquitin-like domain). Interacts with CAVIN3 (via leucine-zipper domain). Interacts with REPS2. Phosphorylated on tyrosine residues by EGFR.

Its subcellular location is the cell membrane. It is found in the nucleus. The protein localises to the membrane. The protein resides in the coated pit. In terms of biological role, seems to be a constitutive component of clathrin-coated pits that is required for receptor-mediated endocytosis. Involved in endocytosis of integrin beta-1 (ITGB1) and transferrin receptor (TFR); internalization of ITGB1 as DAB2-dependent cargo but not TFR seems to require association with DAB2. In Mus musculus (Mouse), this protein is Epidermal growth factor receptor substrate 15-like 1 (Eps15l1).